We begin with the raw amino-acid sequence, 513 residues long: Meiotically up-regulated gene 133 protein (513 aa).

This sequence belongs to the UPF0300 family.

It localises to the golgi apparatus. The protein localises to the vacuole membrane. Its function is as follows. Has a role in meiosis. This Schizosaccharomyces pombe (strain 972 / ATCC 24843) (Fission yeast) protein is Meiotically up-regulated gene 133 protein (mug133).